The following is a 401-amino-acid chain: Glyceraldehyde-3-phosphate dehydrogenase A, chloroplastic (401 aa).

A chloroplast-targeting transit peptide spans methionine 1–alanine 65. Residues arginine 76–isoleucine 77, aspartate 100, and arginine 145 contribute to the NADP(+) site. D-glyceraldehyde 3-phosphate contacts are provided by residues serine 217–threonine 219, threonine 248, arginine 263, threonine 276–glycine 277, and arginine 299. Cysteine 218 serves as the catalytic Nucleophile. Position 381 (asparagine 381) interacts with NADP(+).

The protein belongs to the glyceraldehyde-3-phosphate dehydrogenase family. Tetramer of either four A chains (GAPDH 2) or two A and two B chains (GAPDH 1).

It localises to the plastid. The protein resides in the chloroplast. It carries out the reaction D-glyceraldehyde 3-phosphate + phosphate + NADP(+) = (2R)-3-phospho-glyceroyl phosphate + NADPH + H(+). It participates in carbohydrate biosynthesis; Calvin cycle. This is Glyceraldehyde-3-phosphate dehydrogenase A, chloroplastic (GAPA) from Spinacia oleracea (Spinach).